A 454-amino-acid polypeptide reads, in one-letter code: Phosphoglucosamine mutase (454 aa).

Ser101 acts as the Phosphoserine intermediate in catalysis. The Mg(2+) site is built by Ser101, Asp243, Asp245, and Asp247. Phosphoserine is present on Ser101.

Belongs to the phosphohexose mutase family. Requires Mg(2+) as cofactor. Activated by phosphorylation.

It carries out the reaction alpha-D-glucosamine 1-phosphate = D-glucosamine 6-phosphate. Catalyzes the conversion of glucosamine-6-phosphate to glucosamine-1-phosphate. This Geotalea uraniireducens (strain Rf4) (Geobacter uraniireducens) protein is Phosphoglucosamine mutase.